Consider the following 701-residue polypeptide: F-box/LRR-repeat protein 17 (701 aa).

3 disordered regions span residues 73 to 93 (SAGL…RDGA), 227 to 250 (GGGG…CQAP), and 279 to 321 (VRAG…IPDI). The span at 81 to 90 (PLSPPPPPPR) shows a compositional bias: pro residues. The span at 227-236 (GGGGPAGGGA) shows a compositional bias: gly residues. Residues 285–294 (APSSAQQQPE) are compositionally biased toward polar residues. Positions 318-365 (IPDINQLPPSILLKIFSNLSLNERCLSASLVCKYWRDLCLDFQFWKQL) constitute an F-box domain.

This sequence belongs to the FBXL17 family. Part of the SCF (SKP1-CUL1-F-box) E3 ubiquitin-protein ligase complex SCF(FBXL17) composed of CUL1, SKP1, RBX1 and FBXL17. Interacts with BTB domain-containing proteins such as KLHL12, BCL6 and BACH1; specifically recognizes and binds a conserved degron of non-consecutive residues present at the interface of BTB dimers of aberrant composition. Interacts with SUFU. Interacts with PRMT1.

Its subcellular location is the cytoplasm. The protein resides in the nucleus. In terms of biological role, substrate-recognition component of the SCF(FBXL17) E3 ubiquitin ligase complex, a key component of a quality control pathway required to ensure functional dimerization of BTB domain-containing proteins (dimerization quality control, DQC). FBXL17 specifically recognizes and binds a conserved degron of non-consecutive residues present at the interface of BTB dimers of aberrant composition: aberrant BTB dimer are then ubiquitinated by the SCF(FBXL17) complex and degraded by the proteasome. The ability of the SCF(FBXL17) complex to eliminate compromised BTB dimers is required for the differentiation and survival of neural crest and neuronal cells. The SCF(FBXL17) complex mediates ubiquitination and degradation of BACH1. The SCF(FBXL17) complex is also involved in the regulation of the hedgehog/smoothened (Hh) signaling pathway by mediating the ubiquitination and degradation of SUFU, allowing the release of GLI1 from SUFU for proper Hh signal transduction. The SCF(FBXL17) complex mediates ubiquitination and degradation of PRMT1. This chain is F-box/LRR-repeat protein 17, found in Mus musculus (Mouse).